Here is a 426-residue protein sequence, read N- to C-terminus: Enolase (426 aa).

Gln163 is a binding site for (2R)-2-phosphoglycerate. Glu205 acts as the Proton donor in catalysis. Mg(2+) contacts are provided by Asp242, Glu283, and Asp310. Positions 335, 364, 365, and 386 each coordinate (2R)-2-phosphoglycerate. Lys335 acts as the Proton acceptor in catalysis.

The protein belongs to the enolase family. The cofactor is Mg(2+).

Its subcellular location is the cytoplasm. It localises to the secreted. The protein resides in the cell surface. It carries out the reaction (2R)-2-phosphoglycerate = phosphoenolpyruvate + H2O. It participates in carbohydrate degradation; glycolysis; pyruvate from D-glyceraldehyde 3-phosphate: step 4/5. In terms of biological role, catalyzes the reversible conversion of 2-phosphoglycerate (2-PG) into phosphoenolpyruvate (PEP). It is essential for the degradation of carbohydrates via glycolysis. The chain is Enolase from Arthrobacter sp. (strain FB24).